The sequence spans 87 residues: Large ribosomal subunit protein bL31B (87 aa).

The protein belongs to the bacterial ribosomal protein bL31 family. Type B subfamily. Part of the 50S ribosomal subunit.

This Pseudomonas aeruginosa (strain LESB58) protein is Large ribosomal subunit protein bL31B.